Here is a 165-residue protein sequence, read N- to C-terminus: uncharacterized protein (165 aa).

An RCK C-terminal domain is found at 76–161; it reads LEQVESALDD…LKRLIREKLT (86 aa).

This is an uncharacterized protein from Bacillus subtilis (strain 168).